The primary structure comprises 192 residues: Ion-translocating oxidoreductase complex subunit A (192 aa).

Transmembrane regions (helical) follow at residues L5–L25, I39–V59, L65–V85, A102–L122, A134–M154, and A171–V191.

It belongs to the NqrDE/RnfAE family. The complex is composed of six subunits: RnfA, RnfB, RnfC, RnfD, RnfE and RnfG.

It is found in the cell inner membrane. Its function is as follows. Part of a membrane-bound complex that couples electron transfer with translocation of ions across the membrane. The protein is Ion-translocating oxidoreductase complex subunit A of Shewanella baltica (strain OS185).